The chain runs to 264 residues: Hemin import ATP-binding protein HmuV (264 aa).

Residues 10 to 246 (LQAQNLSYSI…HTLRKWYQAD (237 aa)) form the ABC transporter domain. Position 42–49 (42–49 (GPNGAGKS)) interacts with ATP.

The protein belongs to the ABC transporter superfamily. Heme (hemin) importer (TC 3.A.1.14.5) family. The complex is composed of two ATP-binding proteins (HmuV), two transmembrane proteins (HmuU) and a solute-binding protein (HmuT).

Its subcellular location is the cell inner membrane. Its function is as follows. Part of the ABC transporter complex HmuTUV involved in hemin import. Responsible for energy coupling to the transport system. This Photorhabdus laumondii subsp. laumondii (strain DSM 15139 / CIP 105565 / TT01) (Photorhabdus luminescens subsp. laumondii) protein is Hemin import ATP-binding protein HmuV.